A 248-amino-acid chain; its full sequence is Chromatin target of PRMT1 protein (248 aa).

Ala-2 is modified (N-acetylalanine). Thr-33 is modified (phosphothreonine). Phosphoserine occurs at positions 40, 49, and 64. Lys-70 participates in a covalent cross-link: Glycyl lysine isopeptide (Lys-Gly) (interchain with G-Cter in SUMO2). Residues 151 to 204 (LRRGGVRGRGGPGRGGLGRGAMGRGGIGGRGRGMIGRGRGGFGGRGRGRGRGRG) are disordered. The interval 153-206 (RGGVRGRGGPGRGGLGRGAMGRGGIGGRGRGMIGRGRGGFGGRGRGRGRGRGAL) is interaction with PRMT1. Over residues 157 to 195 (RGRGGPGRGGLGRGAMGRGGIGGRGRGMIGRGRGGFGGR) the composition is skewed to gly residues. The short motif at 194–203 (GRGRGRGRGR) is the GAR motif; involved in 5hmC binding element. Thr-242 carries the phosphothreonine modification.

As to quaternary structure, interacts with PRMT1 and PRMT5. Interacts with the 5FMC complex; the interaction is methylation-dependent. Interacts with FYTTD1, SET and PRC1 complex members CBX4, RNF2 and PHC2; the interactions are methylation-independent. Interacts with ZNF148. Component of the transcription/export (TREX) complex at least composed of ALYREF/THOC4, DDX39B, SARNP/CIP29, CHTOP and the THO subcomplex; TREX seems to have dynamic structure involving ATP-dependent remodeling; in the complex interacts (methylated) with ALYREF/THOC4 and with DDX39B in a methylation-independent manner. Interacts (methylated) with NXF1; the interaction is mutually exclusive with the NXF1:THOC5 interaction. Interacts with WDR77 and ERH. Post-translationally, asymmetrically methylated by PRMT1. Symmetrically methylated by PRMT5. In terms of tissue distribution, expressed in an erythroid progenitor cell line derived from peripheral blood. Expressed in glioblastoma cells.

Its subcellular location is the nucleus. The protein resides in the nucleolus. It is found in the nucleoplasm. It localises to the nucleus speckle. Plays an important role in the ligand-dependent activation of estrogen receptor target genes. May play a role in the silencing of fetal globin genes. Recruits the 5FMC complex to ZNF148, leading to desumoylation of ZNF148 and subsequent transactivation of ZNF148 target genes. Plays an important role in the tumorigenicity of glioblastoma cells. Binds to 5-hydroxymethylcytosine (5hmC) and associates with the methylosome complex containing PRMT1, PRMT5, MEP50 and ERH. The CHTOP-methylosome complex associated with 5hmC is recruited to selective sites on the chromosome, where it methylates H4R3 and activates the transcription of genes involved in glioblastomagenesis. In terms of biological role, required for effective mRNA nuclear export and is a component of the TREX complex which is thought to couple mRNA transcription, processing and nuclear export, and specifically associates with spliced mRNA and not with unspliced pre-mRNA. TREX is recruited to spliced mRNAs by a transcription-independent mechanism, binds to mRNA upstream of the exon-junction complex (EJC) and is recruited in a splicing- and cap-dependent manner to a region near the 5' end of the mRNA where it functions in mRNA export to the cytoplasm via the TAP/NFX1 pathway. The TREX complex is essential for the export of Kaposi's sarcoma-associated herpesvirus (KSHV) intronless mRNAs and infectious virus production. Stimulates DDX39B ATPase and helicase activities. In cooperation with ALYREF/THOC4 enhances NXF1 RNA binding activity. This chain is Chromatin target of PRMT1 protein (CHTOP), found in Homo sapiens (Human).